Consider the following 253-residue polypeptide: 5'/3'-nucleotidase SurE (253 aa).

Residues D8, D9, S39, and N92 each coordinate a divalent metal cation.

The protein belongs to the SurE nucleotidase family. Requires a divalent metal cation as cofactor.

The protein localises to the cytoplasm. The enzyme catalyses a ribonucleoside 5'-phosphate + H2O = a ribonucleoside + phosphate. The catalysed reaction is a ribonucleoside 3'-phosphate + H2O = a ribonucleoside + phosphate. It carries out the reaction [phosphate](n) + H2O = [phosphate](n-1) + phosphate + H(+). Functionally, nucleotidase with a broad substrate specificity as it can dephosphorylate various ribo- and deoxyribonucleoside 5'-monophosphates and ribonucleoside 3'-monophosphates with highest affinity to 3'-AMP. Also hydrolyzes polyphosphate (exopolyphosphatase activity) with the preference for short-chain-length substrates (P20-25). Might be involved in the regulation of dNTP and NTP pools, and in the turnover of 3'-mononucleotides produced by numerous intracellular RNases (T1, T2, and F) during the degradation of various RNAs. The sequence is that of 5'/3'-nucleotidase SurE from Escherichia coli O17:K52:H18 (strain UMN026 / ExPEC).